Here is a 473-residue protein sequence, read N- to C-terminus: Argininosuccinate lyase (473 aa).

Residues S34, N121, and T166 each coordinate 2-(N(omega)-L-arginino)succinate. H167 (proton acceptor) is an active-site residue. The active-site Proton donor is S289. The 2-(N(omega)-L-arginino)succinate site is built by N297, Y329, and Q334.

This sequence belongs to the lyase 1 family. Argininosuccinate lyase subfamily.

The enzyme catalyses 2-(N(omega)-L-arginino)succinate = fumarate + L-arginine. Its pathway is amino-acid biosynthesis; L-arginine biosynthesis; L-arginine from L-ornithine and carbamoyl phosphate: step 3/3. The protein is Argininosuccinate lyase (ARG7) of Chlamydomonas reinhardtii (Chlamydomonas smithii).